A 261-amino-acid polypeptide reads, in one-letter code: Sugar fermentation stimulation protein homolog (261 aa).

The interval Met1–Ala23 is disordered.

This sequence belongs to the SfsA family.

The chain is Sugar fermentation stimulation protein homolog from Syntrophobacter fumaroxidans (strain DSM 10017 / MPOB).